The chain runs to 155 residues: Deoxyuridine 5'-triphosphate nucleotidohydrolase (155 aa).

Substrate contacts are provided by residues 74 to 76 (RSG), Asn87, and 91 to 93 (LID).

It belongs to the dUTPase family. Mg(2+) is required as a cofactor.

The enzyme catalyses dUTP + H2O = dUMP + diphosphate + H(+). It participates in pyrimidine metabolism; dUMP biosynthesis; dUMP from dCTP (dUTP route): step 2/2. This enzyme is involved in nucleotide metabolism: it produces dUMP, the immediate precursor of thymidine nucleotides and it decreases the intracellular concentration of dUTP so that uracil cannot be incorporated into DNA. The sequence is that of Deoxyuridine 5'-triphosphate nucleotidohydrolase from Xylella fastidiosa (strain M12).